Here is a 206-residue protein sequence, read N- to C-terminus: MVHYKLSYFPIRGAGEVIRQIFVYAGQSFEDHRISIEEWAAVKPTTPFGQLPLLEVDGKVLPQSHSIARFLARQFGINGKCAWEEAQVNSIADQFKDYRNEVRPYVMVKMGFAEGDLDALSKDVFLPGFKKHYGFIYNFLKTAGSGYLVGDSLTFVDLLIAQHTADILSTDPALLEEFPQFKAHQEKVHSNANIKKWLETRPETQF.

A GST N-terminal domain is found at 2–79 (VHYKLSYFPI…FLARQFGING (78 aa)). Residues Tyr8, Trp39, Lys43, 49-51 (GQL), and 63-64 (QS) contribute to the glutathione site. A GST C-terminal domain is found at 81 to 206 (CAWEEAQVNS…WLETRPETQF (126 aa)).

This sequence belongs to the GST superfamily. Sigma family.

It catalyses the reaction RX + glutathione = an S-substituted glutathione + a halide anion + H(+). In terms of biological role, conjugation of reduced glutathione to a wide number of exogenous and endogenous hydrophobic electrophiles. This chain is Probable glutathione S-transferase 8 (gst-8), found in Caenorhabditis elegans.